A 241-amino-acid polypeptide reads, in one-letter code: Ribosomal RNA small subunit methyltransferase G (241 aa).

Residues G79, F84, A130–E131, and R150 each bind S-adenosyl-L-methionine.

The protein belongs to the methyltransferase superfamily. RNA methyltransferase RsmG family.

The protein localises to the cytoplasm. In terms of biological role, specifically methylates the N7 position of a guanine in 16S rRNA. The chain is Ribosomal RNA small subunit methyltransferase G from Limosilactobacillus reuteri (strain DSM 20016) (Lactobacillus reuteri).